Here is a 476-residue protein sequence, read N- to C-terminus: Adenosylhomocysteinase (476 aa).

3 residues coordinate substrate: Thr-62, Asp-141, and Glu-201. 202 to 204 lines the NAD(+) pocket; the sequence is TTT. Residues Lys-231 and Asp-235 each contribute to the substrate site. Residues Asn-236, 265 to 270, Glu-288, Asn-323, 344 to 346, and Asn-389 contribute to the NAD(+) site; these read GYGDVG and IGH.

It belongs to the adenosylhomocysteinase family. The cofactor is NAD(+).

It is found in the cytoplasm. It catalyses the reaction S-adenosyl-L-homocysteine + H2O = L-homocysteine + adenosine. Its pathway is amino-acid biosynthesis; L-homocysteine biosynthesis; L-homocysteine from S-adenosyl-L-homocysteine: step 1/1. Functionally, may play a key role in the regulation of the intracellular concentration of adenosylhomocysteine. The polypeptide is Adenosylhomocysteinase (Myxococcus xanthus (strain DK1622)).